A 157-amino-acid chain; its full sequence is Crossover junction endodeoxyribonuclease RuvC (157 aa).

Catalysis depends on residues Asp7, Glu66, and Asp139. Asp7, Glu66, and Asp139 together coordinate Mg(2+).

This sequence belongs to the RuvC family. Homodimer which binds Holliday junction (HJ) DNA. The HJ becomes 2-fold symmetrical on binding to RuvC with unstacked arms; it has a different conformation from HJ DNA in complex with RuvA. In the full resolvosome a probable DNA-RuvA(4)-RuvB(12)-RuvC(2) complex forms which resolves the HJ. The cofactor is Mg(2+).

It is found in the cytoplasm. The enzyme catalyses Endonucleolytic cleavage at a junction such as a reciprocal single-stranded crossover between two homologous DNA duplexes (Holliday junction).. In terms of biological role, the RuvA-RuvB-RuvC complex processes Holliday junction (HJ) DNA during genetic recombination and DNA repair. Endonuclease that resolves HJ intermediates. Cleaves cruciform DNA by making single-stranded nicks across the HJ at symmetrical positions within the homologous arms, yielding a 5'-phosphate and a 3'-hydroxyl group; requires a central core of homology in the junction. The consensus cleavage sequence is 5'-(A/T)TT(C/G)-3'. Cleavage occurs on the 3'-side of the TT dinucleotide at the point of strand exchange. HJ branch migration catalyzed by RuvA-RuvB allows RuvC to scan DNA until it finds its consensus sequence, where it cleaves and resolves the cruciform DNA. The chain is Crossover junction endodeoxyribonuclease RuvC from Helicobacter acinonychis (strain Sheeba).